A 202-amino-acid polypeptide reads, in one-letter code: MSALETQNLGMVPVVIEQSGRGERAYDIYSRLLRERVIFLVGPVNDQTANLVVAQLLFLESENPDKDISLYINSPGGSVSAGLSIFDTMQFIKPDVSTLCMGIAASMGAFLLAAGAKGKRFALPNSRVMIHQPSGGAQGQATDIEIQAREILKLRESLNGILAERTGQPLEKIRADSERDYFMSAEEATGYGLIDKVIAQRA.

Ser106 acts as the Nucleophile in catalysis. His131 is an active-site residue.

This sequence belongs to the peptidase S14 family. In terms of assembly, fourteen ClpP subunits assemble into 2 heptameric rings which stack back to back to give a disk-like structure with a central cavity, resembling the structure of eukaryotic proteasomes.

It localises to the cytoplasm. The enzyme catalyses Hydrolysis of proteins to small peptides in the presence of ATP and magnesium. alpha-casein is the usual test substrate. In the absence of ATP, only oligopeptides shorter than five residues are hydrolyzed (such as succinyl-Leu-Tyr-|-NHMec, and Leu-Tyr-Leu-|-Tyr-Trp, in which cleavage of the -Tyr-|-Leu- and -Tyr-|-Trp bonds also occurs).. Cleaves peptides in various proteins in a process that requires ATP hydrolysis. Has a chymotrypsin-like activity. Plays a major role in the degradation of misfolded proteins. The protein is ATP-dependent Clp protease proteolytic subunit of Methylibium petroleiphilum (strain ATCC BAA-1232 / LMG 22953 / PM1).